We begin with the raw amino-acid sequence, 159 residues long: Ribosome maturation factor RimP (159 aa).

It belongs to the RimP family.

It localises to the cytoplasm. Functionally, required for maturation of 30S ribosomal subunits. In Geobacter metallireducens (strain ATCC 53774 / DSM 7210 / GS-15), this protein is Ribosome maturation factor RimP.